The primary structure comprises 566 residues: MPKLEIYKNLFLDKIGKNFTNLEISELLEPFKAEFDGFDESSGKIKIEFNDTNRPDLWSYLGLARQIKTYFFGEMPYYDFFSKKGDFKKFYGEILVDGKMSQIRPFIFGFLAKGLIINDKMLETLIQFQEKLCQNYGQKRRRIAMGMYNSNFIKFPISYIASSPNHKFVPLGMDYELSLLEINEKHPKGLEYSHIIKNFDKFPLLLDDNNNVVSYPPIINSNNIGSLKVGDTDLFVEVTGIDFEATLLALSIAACDFYDMGFEILPVKTVFREPFNLDFKELVCPYYFQEEVEFNVENINRLLGSNLTLERICLSLKKMGVNSYSKDFKNYIVPPFYRNDFLHEVDVIEDVMIGEGLSSFNPELPKAFAVGRLSPLEEFSRNVRNLMVGMGFQEMIYNYMGSKKDFIDRMNINDQNFLKVSNPMTENYEYIRASIIPNLLKSESVSSNFPYPHKIFEIGKVALRNLDTTEGTSTFTNLAFLMSGKEISFNEINSIVATLFYYLNIEINLIESKTTFYINGRGADIVIEGFNIGGFGEISPYVLNNFGIFIPCSVFEVNINKLMSRS.

One can recognise a B5 domain in the interval 287 to 362; that stretch reads YFQEEVEFNV…IGEGLSSFNP (76 aa). Mg(2+) is bound by residues D340, D346, E349, and D350.

Belongs to the phenylalanyl-tRNA synthetase beta subunit family. Type 2 subfamily. Tetramer of two alpha and two beta subunits. The cofactor is Mg(2+).

It is found in the cytoplasm. The catalysed reaction is tRNA(Phe) + L-phenylalanine + ATP = L-phenylalanyl-tRNA(Phe) + AMP + diphosphate + H(+). In Borreliella burgdorferi (strain ZS7) (Borrelia burgdorferi), this protein is Phenylalanine--tRNA ligase beta subunit.